Here is a 939-residue protein sequence, read N- to C-terminus: Progesterone receptor (939 aa).

The segment covering 1-11 (MTERTGKDARA) has biased composition (basic and acidic residues). An AF3; mediates transcriptional activation (in isoform B) region spans residues 1-174 (MTERTGKDAR…RSSQGAACPL (174 aa)). The interval 1–302 (MTERTGKDAR…AEQDAPAPGC (302 aa)) is disordered. A modulating, Ala/Pro-rich region spans residues 1–572 (MTERTGKDAR…YSFESLPQKI (572 aa)). A Glycyl lysine isopeptide (Lys-Gly) (interchain with G-Cter in SUMO) cross-link involves residue lysine 7. A compositionally biased stretch (low complexity) spans 15–26 (AGGAPSPAPAAE). Phosphoserine is present on serine 20. A compositionally biased stretch (basic and acidic residues) spans 27–36 (PESRRRDGGR). The span at 49–67 (AAAAAAAAAAASAAPSAPS) shows a compositional bias: low complexity. Residue serine 141 is modified to Phosphoserine. A mediates transcriptional transrepression (in isoform A) region spans residues 175–314 (MSRPEGKAGD…LATTMMDFIH (140 aa)). A Nuclear localization signal motif is present at residues 193 to 197 (KGPPR). A Phosphoserine modification is found at serine 200. Low complexity-rich tracts occupy residues 211-230 (GAHAWPGAAGKAATQPAALG) and 257-278 (PAAAAGAAPAAPGTAPGGTAPV). A Phosphoserine; by MAPK1 modification is found at serine 303. Serine 349 bears the Phosphoserine; by MAPK mark. Residue lysine 392 forms a Glycyl lysine isopeptide (Lys-Gly) (interchain with G-Cter in SUMO); alternate linkage. Residue lysine 392 forms a Glycyl lysine isopeptide (Lys-Gly) (interchain with G-Cter in ubiquitin); alternate linkage. A Phosphoserine; by CDK2 modification is found at serine 404. The AF1; mediates transcriptional activation stretch occupies residues 463 to 552 (PALECVLYKA…VYQPYLNYLR (90 aa)). A Glycyl lysine isopeptide (Lys-Gly) (interchain with G-Cter in SUMO) cross-link involves residue lysine 537. NR C4-type zinc fingers lie at residues 573 to 593 (CLICGDEASGCHYGVLTCGSC) and 609 to 633 (CAGRNDCIVDKIRRKNCPACRLRKC). A DNA-binding region (nuclear receptor) is located at residues 573–645 (CLICGDEASG…AGMVLGGRKF (73 aa)). A Phosphoserine modification is found at serine 682. Positions 685–919 (QDIQLIPPLI…EFPEMMSEVI (235 aa)) constitute an NR LBD domain. The AF2; mediates transcriptional activation stretch occupies residues 693–939 (LINLLMSIEP…MVKPLLFHKK (247 aa)).

This sequence belongs to the nuclear hormone receptor family. NR3 subfamily. As to quaternary structure, interacts with SMARD1 and UNC45A. Interacts with CUEDC2; the interaction promotes ubiquitination, decreases sumoylation, and represses transcriptional activity. Interacts with PIAS3; the interaction promotes sumoylation of PR in a hormone-dependent manner, inhibits DNA-binding, and alters nuclear export. Interacts with SP1; the interaction requires ligand-induced phosphorylation on Ser-349 by ERK1/2-MAPK. Interacts with PRMT2. Isoform A interacts with NCOR2. Isoform B (but not isoform A) interacts with NCOA2 and NCOA1. Isoform B (but not isoform A) interacts with KLF9. Interacts with GTF2B. Phosphorylated on multiple serine sites. Several of these sites are hormone-dependent. Phosphorylation on Ser-303 occurs preferentially on isoform B, is highly hormone-dependent and modulates ubiquitination and sumoylation on Lys-392. Phosphorylation on Ser-303 and Ser-349 also requires induction by hormone. Basal phosphorylation on Ser-200 and Ser-404 is increased in response to progesterone and can be phosphorylated in vitro by the CDK2-A1 complex. Increased levels of phosphorylation on Ser-404 also in the presence of EGF, heregulin, IGF, PMA and FBS. Phosphorylation at this site by CDK2 is ligand-independent, and increases nuclear translocation and transcriptional activity. Phosphorylation at Ser-303, but not at Ser-200, is impaired during the G(2)/M phase of the cell cycle. Phosphorylation on Ser-349 by ERK1/2 MAPK is required for interaction with SP1. In terms of processing, sumoylation is hormone-dependent and represses transcriptional activity. Sumoylation on all three sites is enhanced by PIAS3. Desumoylated by SENP1. Sumoylation on Lys-392, the main site of sumoylation, is repressed by ubiquitination on the same site, and modulated by phosphorylation at Ser-303. Post-translationally, ubiquitination is hormone-dependent and represses sumoylation on the same site. Promoted by MAPK-mediated phosphorylation on Ser-303. Palmitoylated by ZDHHC7 and ZDHHC21. Palmitoylation is required for plasma membrane targeting and for rapid intracellular signaling via ERK and AKT kinases and cAMP generation. In terms of tissue distribution, expressed in mammary gland and uterus.

It is found in the nucleus. The protein resides in the cytoplasm. Its function is as follows. The steroid hormones and their receptors are involved in the regulation of eukaryotic gene expression and affect cellular proliferation and differentiation in target tissues. Depending on the isoform, progesterone receptor functions as a transcriptional activator or repressor. In terms of biological role, ligand-dependent transdominant repressor of steroid hormone receptor transcriptional activity including repression of its isoform B, MR and ER. Transrepressional activity may involve recruitment of corepressor NCOR2. Functionally, transcriptional activator of several progesteron-dependent promoters in a variety of cell types. Involved in activation of SRC-dependent MAPK signaling on hormone stimulation. This is Progesterone receptor (PGR) from Canis lupus familiaris (Dog).